A 489-amino-acid polypeptide reads, in one-letter code: GTPase Der (489 aa).

EngA-type G domains follow at residues 3–166 (PVVA…AEAM) and 200–373 (IKLA…ESAT). Residues 9-16 (GRPNVGKS), 56-60 (DTGGI), 118-121 (NKVD), 206-213 (GKPNVGKS), 253-257 (DTAGV), and 318-321 (NKWD) contribute to the GTP site. In terms of domain architecture, KH-like spans 374–458 (RRVSTSMLTR…PIQVRFQEGG (85 aa)).

This sequence belongs to the TRAFAC class TrmE-Era-EngA-EngB-Septin-like GTPase superfamily. EngA (Der) GTPase family. In terms of assembly, associates with the 50S ribosomal subunit.

Functionally, GTPase that plays an essential role in the late steps of ribosome biogenesis. This chain is GTPase Der, found in Shewanella loihica (strain ATCC BAA-1088 / PV-4).